A 100-amino-acid chain; its full sequence is NAD(P)H-quinone oxidoreductase subunit 4L, chloroplastic (100 aa).

Transmembrane regions (helical) follow at residues 1–21, 29–49, and 63–83; these read MLEHALISGAYLFSIGIYGLI, ALMCLELILNAVNVNLVTFSN, and IFVTAIAAAEAAIGLAIALAI.

The protein belongs to the complex I subunit 4L family. As to quaternary structure, NDH is composed of at least 16 different subunits, 5 of which are encoded in the nucleus.

It localises to the plastid. Its subcellular location is the chloroplast thylakoid membrane. The catalysed reaction is a plastoquinone + NADH + (n+1) H(+)(in) = a plastoquinol + NAD(+) + n H(+)(out). It carries out the reaction a plastoquinone + NADPH + (n+1) H(+)(in) = a plastoquinol + NADP(+) + n H(+)(out). NDH shuttles electrons from NAD(P)H:plastoquinone, via FMN and iron-sulfur (Fe-S) centers, to quinones in the photosynthetic chain and possibly in a chloroplast respiratory chain. The immediate electron acceptor for the enzyme in this species is believed to be plastoquinone. Couples the redox reaction to proton translocation, and thus conserves the redox energy in a proton gradient. This chain is NAD(P)H-quinone oxidoreductase subunit 4L, chloroplastic, found in Cycas taitungensis (Prince sago).